Here is a 143-residue protein sequence, read N- to C-terminus: Interferon gamma (143 aa).

Q1 is subject to Pyrrolidone carboxylic acid. Residues N25 and N97 are each glycosylated (N-linked (GlcNAc...) asparagine).

Belongs to the type II (or gamma) interferon family. As to quaternary structure, homodimer. Interacts with IFNGR1 (via extracellular domain); this interaction promotes IFNGR1 dimerization.

Its subcellular location is the secreted. Functionally, type II interferon produced by immune cells such as T-cells and NK cells that plays crucial roles in antimicrobial, antiviral, and antitumor responses by activating effector immune cells and enhancing antigen presentation. Primarily signals through the JAK-STAT pathway after interaction with its receptor IFNGR1 to affect gene regulation. Upon IFNG binding, IFNGR1 intracellular domain opens out to allow association of downstream signaling components JAK2, JAK1 and STAT1, leading to STAT1 activation, nuclear translocation and transcription of IFNG-regulated genes. Many of the induced genes are transcription factors such as IRF1 that are able to further drive regulation of a next wave of transcription. Plays a role in class I antigen presentation pathway by inducing a replacement of catalytic proteasome subunits with immunoproteasome subunits. In turn, increases the quantity, quality, and repertoire of peptides for class I MHC loading. Increases the efficiency of peptide generation also by inducing the expression of activator PA28 that associates with the proteasome and alters its proteolytic cleavage preference. Up-regulates as well MHC II complexes on the cell surface by promoting expression of several key molecules such as cathepsins B/CTSB, H/CTSH, and L/CTSL. Participates in the regulation of hematopoietic stem cells during development and under homeostatic conditions by affecting their development, quiescence, and differentiation. The polypeptide is Interferon gamma (IFNG) (Pan troglodytes (Chimpanzee)).